A 905-amino-acid polypeptide reads, in one-letter code: Protein translocase subunit SecA (905 aa).

ATP contacts are provided by residues Gln89, 107–111, and Asp502; that span reads GEGKT. Residues 837 to 885 form a disordered region; sequence EQTDVGDPILNDQNKKNSSTLWTPSQENKFVNPKDRNPSDSTTWGKVGR. Over residues 852–865 the composition is skewed to polar residues; that stretch reads KNSSTLWTPSQENK. Residues Cys889, Cys891, Cys900, and His901 each coordinate Zn(2+).

It belongs to the SecA family. As to quaternary structure, monomer and homodimer. Part of the essential Sec protein translocation apparatus which comprises SecA, SecYEG and auxiliary proteins SecDF-YajC and YidC. Zn(2+) serves as cofactor.

The protein resides in the cell inner membrane. Its subcellular location is the cytoplasm. The enzyme catalyses ATP + H2O + cellular proteinSide 1 = ADP + phosphate + cellular proteinSide 2.. Part of the Sec protein translocase complex. Interacts with the SecYEG preprotein conducting channel. Has a central role in coupling the hydrolysis of ATP to the transfer of proteins into and across the cell membrane, serving both as a receptor for the preprotein-SecB complex and as an ATP-driven molecular motor driving the stepwise translocation of polypeptide chains across the membrane. The protein is Protein translocase subunit SecA of Bartonella henselae (strain ATCC 49882 / DSM 28221 / CCUG 30454 / Houston 1) (Rochalimaea henselae).